Consider the following 493-residue polypeptide: E3 ubiquitin-protein ligase TRIM35 (493 aa).

Methionine 1 is modified (N-acetylmethionine). A phosphoserine mark is found at serine 4 and serine 8. An RING-type zinc finger spans residues 21-61 (CAVCYDPFRDAVTLRCGHNFCRGCVSRCWEVQVSPTCPVCK). The segment at 96-137 (RFSRVCRLHRGQLSLFCLEDKELLCCSCQADPRHQGHRVQPV) adopts a B box-type zinc-finger fold. 4 residues coordinate Zn(2+): cysteine 101, histidine 104, cysteine 123, and histidine 129. The stretch at 210 to 251 (AEETRQKQLLADEKMKQLTEETEVLAHEIERLQMEMKEDDVS) forms a coiled coil. The region spanning 284 to 487 (LGSLQYRVWK…LRICPLHISV (204 aa)) is the B30.2/SPRY domain.

Belongs to the TRIM/RBCC family. Interacts with PKM isoform M2, but not isoform M1; this interaction may compete with that between PKM and FGFR1, and hence reduces FGFR1-dependent tyrosine phosphorylation of PKM. Interacts with IRF7; this interaction promotes IRF7 proteasomal degradation. Interacts with TRAF3; this interaction promotes TRAF3 activation.

The protein resides in the cytoplasm. It is found in the nucleus. The catalysed reaction is S-ubiquitinyl-[E2 ubiquitin-conjugating enzyme]-L-cysteine + [acceptor protein]-L-lysine = [E2 ubiquitin-conjugating enzyme]-L-cysteine + N(6)-ubiquitinyl-[acceptor protein]-L-lysine.. It functions in the pathway protein modification; protein ubiquitination. Functionally, E3 ubiquitin-protein ligase that participates in multiple biological processes including cell death, glucose metabolism, and in particular, the innate immune response. Mediates 'Lys-63'-linked polyubiquitination of TRAF3 thereby promoting type I interferon production via RIG-I signaling pathway. Can also catalyze 'Lys-48'-linked polyubiquitination and proteasomal degradation of viral proteins such as influenza virus PB2. Acts as a negative feedback regulator of TLR7- and TLR9-triggered signaling. Mechanistically, promotes the 'Lys-48'-linked ubiquitination of IRF7 and induces its degradation via a proteasome-dependent pathway. Reduces FGFR1-dependent tyrosine phosphorylation of PKM, inhibiting PKM-dependent lactate production, glucose metabolism, and cell growth. The polypeptide is E3 ubiquitin-protein ligase TRIM35 (TRIM35) (Homo sapiens (Human)).